The primary structure comprises 183 residues: MTIKREMRNDKRAAPKAPINENISAREVRLIGADGEQVGIVSIDEALRIADEAKLDLVEISADAVPPVCKVMDYGKHLFEKKKQANEAKKNQKQIQIKEIKFRPGTEDGDYQVKLRNLVRFLTDGDKAKISLRFRGREMAHQELGMELLKRVEADLAEYGTVEQHPKMEGRQLMMVIAPKKKK.

It belongs to the IF-3 family. In terms of assembly, monomer.

It is found in the cytoplasm. IF-3 binds to the 30S ribosomal subunit and shifts the equilibrium between 70S ribosomes and their 50S and 30S subunits in favor of the free subunits, thus enhancing the availability of 30S subunits on which protein synthesis initiation begins. The protein is Translation initiation factor IF-3 of Pseudomonas putida (strain W619).